A 90-amino-acid chain; its full sequence is Small ribosomal subunit protein bS16 (90 aa).

Belongs to the bacterial ribosomal protein bS16 family.

The chain is Small ribosomal subunit protein bS16 from Moorella thermoacetica (strain ATCC 39073 / JCM 9320).